The chain runs to 83 residues: MKTLLLTLVVVTIVCLDFGHTLICYNDHGFIGKTTETCENGMTTCYEKRWTEARGTRIDRGCGCPNVKPGVNLNCCKTDRCNG.

The N-terminal stretch at Met1 to Thr21 is a signal peptide. 4 disulfides stabilise this stretch: Cys24–Cys45, Cys38–Cys62, Cys64–Cys75, and Cys76–Cys81.

This sequence belongs to the three-finger toxin family. Short-chain subfamily. Type I alpha-neurotoxin sub-subfamily. In terms of tissue distribution, expressed by the venom gland.

The protein resides in the secreted. Functionally, binds to muscle nicotinic acetylcholine receptor (nAChR) and inhibits acetylcholine from binding to the receptor, thereby impairing neuromuscular transmission. This is Three-finger toxin MALT0058C from Micrurus altirostris (Uruguayan coral snake).